The chain runs to 336 residues: Ferredoxin--NADP reductase (336 aa).

FAD contacts are provided by glutamate 34, glutamine 42, tyrosine 47, valine 87, phenylalanine 121, aspartate 286, and serine 326.

Belongs to the ferredoxin--NADP reductase type 2 family. Homodimer. Requires FAD as cofactor.

It catalyses the reaction 2 reduced [2Fe-2S]-[ferredoxin] + NADP(+) + H(+) = 2 oxidized [2Fe-2S]-[ferredoxin] + NADPH. The chain is Ferredoxin--NADP reductase from Leuconostoc mesenteroides subsp. mesenteroides (strain ATCC 8293 / DSM 20343 / BCRC 11652 / CCM 1803 / JCM 6124 / NCDO 523 / NBRC 100496 / NCIMB 8023 / NCTC 12954 / NRRL B-1118 / 37Y).